The chain runs to 338 residues: CRISPR system Cmr subunit Cmr1-1 (338 aa).

Belongs to the CRISPR system Cmr1 family. In terms of assembly, part of the type III-B Cmr ribonucleoprotein (RNP) complex, an elongated RNP with Cmr2 and Cmr3 as the base, with Cmr4 and Cmr5 forming a helical core along the mature crRNA (39 or 45 nt in length), while the complex is capped by Cmr6 and Cmr1. The 5' end of the crRNA is bound to Cmr2 and Cmr3, while Cmr6 and a Cmr1 subunit (Cmr1-1 or Cmr1-2) cap the 3' end of the crRNA. The target RNA lies antiparallel to the crRNA, with its 5' end near Cmr1 and Cmr6 and its 3' end near Cmr2 and Cmr3; major target cleavage occurs nears the junction of Cmr1/Cmr6 and Cmr4/Cmr, with minor cleavage occurring at 6 nt intervals which coincide with the proposed spacing of Cmr4 subunits.

The protein resides in the cytoplasm. CRISPR (clustered regularly interspaced short palindromic repeat), is an adaptive immune system that provides protection against mobile genetic elements (viruses, transposable elements and conjugative plasmids). CRISPR clusters contain sequences complementary to antecedent mobile elements and target invading nucleic acids. CRISPR clusters are transcribed and processed into CRISPR RNA (crRNA), formerly called psiRNA (prokaryotic silencing) in this organism. Part of the Cmr ribonucleoprotein complex which has divalent cation-dependent endoribonuclease activity specific for ssRNA complementary to the crRNA (target RNA), generating 5' hydroxy- and 3' phosphate or 2'-3' cyclic phosphate termini. Cmr4 is probably the subunit that cleaves target RNA. Cmr complex does not cleave ssDNA complementary to the crRNA. Cleavage of invading RNA is guided by the crRNA; substrate cleavage occurs a fixed distance (14 nt) from the 3' end of the crRNA. In vitro reconstitution shows Cmr1-2 and Cmr5 are not absolutely necessary for target cleavage. The polypeptide is CRISPR system Cmr subunit Cmr1-1 (Pyrococcus furiosus (strain ATCC 43587 / DSM 3638 / JCM 8422 / Vc1)).